Here is a 313-residue protein sequence, read N- to C-terminus: Olfactory receptor 4Q3 (313 aa).

The Extracellular portion of the chain corresponds to 1-25; the sequence is MKKEQDSNVTEFVLLGLSSSWELQL. A glycan (N-linked (GlcNAc...) asparagine) is linked at Asn-8. The helical transmembrane segment at 26–49 threads the bilayer; that stretch reads FLFLLFLFFYIAIVLGNLLIVVTV. The Cytoplasmic segment spans residues 50 to 58; it reads QAHAHLLQS. The helical transmembrane segment at 59–80 threads the bilayer; sequence PMYYFLGHLSFIDLCLSCVTVP. The Extracellular portion of the chain corresponds to 81–101; sequence KMLGDFLQQGKSISFSGCLAQ. Cysteines 98 and 190 form a disulfide. Residues 102-121 form a helical membrane-spanning segment; it reads IYFLHFLGASEMFLLTVMAY. At 122–140 the chain is on the cytoplasmic side; that stretch reads DRYVAICNPLRYLTVMNPQ. Residues 141–159 traverse the membrane as a helical segment; it reads LCLWLVLACWCGGFIHSIM. Residues 160–196 lie on the Extracellular side of the membrane; it reads QVILVIQLPFCGPNELDNFYCDVPQVIKLACMDTYVV. Residues 197–220 form a helical membrane-spanning segment; sequence EVLVIANSGLLSLVCFLVLLFSYA. The Cytoplasmic segment spans residues 221–236; sequence IILITLRTHFCQGQNK. Residues 237–259 form a helical membrane-spanning segment; the sequence is VFSTCASHLTVVSLIFVPCVFIY. Residues 260–270 lie on the Extracellular side of the membrane; sequence LRPFCSFSVDK. Residues 271–290 form a helical membrane-spanning segment; that stretch reads IFSLFYTVITPMLNPLIYTL. At 291–313 the chain is on the cytoplasmic side; the sequence is RNTDMKTAMKKLRIKPCGIPLPC.

It belongs to the G-protein coupled receptor 1 family.

Its subcellular location is the cell membrane. Odorant receptor. This Homo sapiens (Human) protein is Olfactory receptor 4Q3 (OR4Q3).